Consider the following 440-residue polypeptide: NADH-quinone oxidoreductase subunit D 1 (440 aa).

The protein belongs to the complex I 49 kDa subunit family. In terms of assembly, NDH-1 is composed of 14 different subunits. Subunits NuoB, C, D, E, F, and G constitute the peripheral sector of the complex.

It is found in the cell membrane. The enzyme catalyses a quinone + NADH + 5 H(+)(in) = a quinol + NAD(+) + 4 H(+)(out). Its function is as follows. NDH-1 shuttles electrons from NADH, via FMN and iron-sulfur (Fe-S) centers, to quinones in the respiratory chain. The immediate electron acceptor for the enzyme in this species is believed to be a menaquinone. Couples the redox reaction to proton translocation (for every two electrons transferred, four hydrogen ions are translocated across the cytoplasmic membrane), and thus conserves the redox energy in a proton gradient. The polypeptide is NADH-quinone oxidoreductase subunit D 1 (Streptomyces griseus subsp. griseus (strain JCM 4626 / CBS 651.72 / NBRC 13350 / KCC S-0626 / ISP 5235)).